A 257-amino-acid chain; its full sequence is ATP synthase subunit a (257 aa).

Helical transmembrane passes span 34-54, 93-113, 122-142, 149-169, 187-207, and 210-230; these read ITNIGLYMTIAAFIAFYFSIL, YFPFMYTLFIFILINNLIGMV, HFILTFSLSFTVVLGATVLGF, FFSLFVPAGCPLGLLPLLVLI, ANILSGHMLLNILSGFTYNIM, and GIIFFILGLLPLAFIIAFSGL.

Belongs to the ATPase A chain family. As to quaternary structure, F-type ATPases have 2 components, CF(1) - the catalytic core - and CF(0) - the membrane proton channel. CF(1) has five subunits: alpha(3), beta(3), gamma(1), delta(1), epsilon(1). CF(0) has three main subunits: a, b and c.

The protein resides in the mitochondrion inner membrane. In terms of biological role, mitochondrial membrane ATP synthase (F(1)F(0) ATP synthase or Complex V) produces ATP from ADP in the presence of a proton gradient across the membrane which is generated by electron transport complexes of the respiratory chain. F-type ATPases consist of two structural domains, F(1) - containing the extramembraneous catalytic core and F(0) - containing the membrane proton channel, linked together by a central stalk and a peripheral stalk. During catalysis, ATP synthesis in the catalytic domain of F(1) is coupled via a rotary mechanism of the central stalk subunits to proton translocation. Key component of the proton channel; it may play a direct role in the translocation of protons across the membrane. The protein is ATP synthase subunit a (ATP6) of Cochliobolus heterostrophus (Southern corn leaf blight fungus).